Here is a 56-residue protein sequence, read N- to C-terminus: Small ribosomal subunit protein uS14 (56 aa).

The Zn(2+) site is built by Cys21, Cys24, Cys39, and Cys42.

The protein belongs to the universal ribosomal protein uS14 family. Component of the 40S small ribosomal subunit. Zn(2+) serves as cofactor.

It localises to the cytoplasm. The protein resides in the cytosol. It is found in the rough endoplasmic reticulum. This is Small ribosomal subunit protein uS14 (RpS29) from Plutella xylostella (Diamondback moth).